Here is a 541-residue protein sequence, read N- to C-terminus: uncharacterized protein (541 aa).

An N-terminal signal peptide occupies residues Met1–Ser22. Cys23 carries the N-palmitoyl cysteine lipid modification. Cys23 carries S-diacylglycerol cysteine lipidation. Disordered stretches follow at residues Ala446–Leu468 and Lys480–Gln514. The span at Gly448 to Ser460 shows a compositional bias: low complexity. Positions Lys480–Asp490 are enriched in basic and acidic residues.

It belongs to the MG185/MG260 family.

Its subcellular location is the cell membrane. This is an uncharacterized protein from Mycoplasma pneumoniae (strain ATCC 29342 / M129 / Subtype 1) (Mycoplasmoides pneumoniae).